Consider the following 457-residue polypeptide: Argininosuccinate lyase (457 aa).

Belongs to the lyase 1 family. Argininosuccinate lyase subfamily.

The protein resides in the cytoplasm. It catalyses the reaction 2-(N(omega)-L-arginino)succinate = fumarate + L-arginine. It participates in amino-acid biosynthesis; L-arginine biosynthesis; L-arginine from L-ornithine and carbamoyl phosphate: step 3/3. The polypeptide is Argininosuccinate lyase (Shigella sonnei (strain Ss046)).